A 132-amino-acid polypeptide reads, in one-letter code: Small ribosomal subunit protein uS11 (132 aa).

The protein belongs to the universal ribosomal protein uS11 family. As to quaternary structure, part of the 30S ribosomal subunit. Interacts with proteins S7 and S18. Binds to IF-3.

Functionally, located on the platform of the 30S subunit, it bridges several disparate RNA helices of the 16S rRNA. Forms part of the Shine-Dalgarno cleft in the 70S ribosome. The polypeptide is Small ribosomal subunit protein uS11 (Alkaliphilus metalliredigens (strain QYMF)).